A 295-amino-acid polypeptide reads, in one-letter code: Methionine aminopeptidase (295 aa).

His-63 provides a ligand contact to substrate. 3 residues coordinate a divalent metal cation: Asp-83, Asp-94, and His-154. Position 162 (His-162) interacts with substrate. Glu-188 and Glu-281 together coordinate a divalent metal cation.

The protein belongs to the peptidase M24A family. Methionine aminopeptidase archaeal type 2 subfamily. In terms of assembly, monomer. Requires Fe(2+) as cofactor. It depends on Co(2+) as a cofactor. The cofactor is Ni(2+). Mn(2+) serves as cofactor.

The enzyme catalyses Release of N-terminal amino acids, preferentially methionine, from peptides and arylamides.. In terms of biological role, removes the N-terminal methionine from nascent proteins. The N-terminal methionine is often cleaved when the second residue in the primary sequence is small and uncharged (Met-Ala-, Cys, Gly, Pro, Ser, Thr, or Val). This chain is Methionine aminopeptidase, found in Thermococcus onnurineus (strain NA1).